The chain runs to 189 residues: Hypoxanthine/guanine phosphoribosyltransferase (189 aa).

It belongs to the purine/pyrimidine phosphoribosyltransferase family. Archaeal HPRT subfamily. Homodimer.

The protein localises to the cytoplasm. The enzyme catalyses IMP + diphosphate = hypoxanthine + 5-phospho-alpha-D-ribose 1-diphosphate. It catalyses the reaction GMP + diphosphate = guanine + 5-phospho-alpha-D-ribose 1-diphosphate. It participates in purine metabolism; IMP biosynthesis via salvage pathway; IMP from hypoxanthine: step 1/1. Its function is as follows. Catalyzes a salvage reaction resulting in the formation of IMP that is energically less costly than de novo synthesis. The sequence is that of Hypoxanthine/guanine phosphoribosyltransferase from Methanothrix soehngenii (strain ATCC 5969 / DSM 3671 / JCM 10134 / NBRC 103675 / OCM 69 / GP-6) (Methanosaeta concilii).